The primary structure comprises 549 residues: Hydroxylamine reductase (549 aa).

Residues Cys5, Cys8, Cys17, and Cys23 each contribute to the [4Fe-4S] cluster site. His243, Glu267, Cys311, Cys403, Cys431, Cys456, Glu491, and Lys493 together coordinate hybrid [4Fe-2O-2S] cluster. Residue Cys403 is modified to Cysteine persulfide.

Belongs to the HCP family. It depends on [4Fe-4S] cluster as a cofactor. Hybrid [4Fe-2O-2S] cluster serves as cofactor.

It localises to the cytoplasm. The catalysed reaction is A + NH4(+) + H2O = hydroxylamine + AH2 + H(+). In terms of biological role, catalyzes the reduction of hydroxylamine to form NH(3) and H(2)O. This Desulfitobacterium hafniense (strain DSM 10664 / DCB-2) protein is Hydroxylamine reductase.